A 283-amino-acid polypeptide reads, in one-letter code: Pantothenate synthetase (283 aa).

Position 31 to 38 (31 to 38 (MGALHEGH)) interacts with ATP. H38 acts as the Proton donor in catalysis. Residue Q62 participates in (R)-pantoate binding. Q62 is a beta-alanine binding site. Residue 148-151 (GKKD) participates in ATP binding. Q154 contacts (R)-pantoate. Residues V177 and 185–188 (RSSR) each bind ATP.

The protein belongs to the pantothenate synthetase family. As to quaternary structure, homodimer.

The protein resides in the cytoplasm. It carries out the reaction (R)-pantoate + beta-alanine + ATP = (R)-pantothenate + AMP + diphosphate + H(+). It participates in cofactor biosynthesis; (R)-pantothenate biosynthesis; (R)-pantothenate from (R)-pantoate and beta-alanine: step 1/1. In terms of biological role, catalyzes the condensation of pantoate with beta-alanine in an ATP-dependent reaction via a pantoyl-adenylate intermediate. The protein is Pantothenate synthetase of Staphylococcus haemolyticus (strain JCSC1435).